Reading from the N-terminus, the 340-residue chain is Ketol-acid reductoisomerase (NADP(+)) (340 aa).

Residues 1 to 182 enclose the KARI N-terminal Rossmann domain; it reads MRVYYDRDCD…GGGRSGIIET (182 aa). NADP(+) is bound by residues 24–27, R48, S51, S53, and 83–86; these read YGSQ and DELQ. Residue H108 is part of the active site. G134 provides a ligand contact to NADP(+). The KARI C-terminal knotted domain occupies 183–329; the sequence is NFRQECETDL…EKLRGMMPWI (147 aa). Mg(2+) contacts are provided by D191, E195, E227, and E231. S252 is a substrate binding site.

This sequence belongs to the ketol-acid reductoisomerase family. Requires Mg(2+) as cofactor.

It carries out the reaction (2R)-2,3-dihydroxy-3-methylbutanoate + NADP(+) = (2S)-2-acetolactate + NADPH + H(+). It catalyses the reaction (2R,3R)-2,3-dihydroxy-3-methylpentanoate + NADP(+) = (S)-2-ethyl-2-hydroxy-3-oxobutanoate + NADPH + H(+). It participates in amino-acid biosynthesis; L-isoleucine biosynthesis; L-isoleucine from 2-oxobutanoate: step 2/4. Its pathway is amino-acid biosynthesis; L-valine biosynthesis; L-valine from pyruvate: step 2/4. Functionally, involved in the biosynthesis of branched-chain amino acids (BCAA). Catalyzes an alkyl-migration followed by a ketol-acid reduction of (S)-2-acetolactate (S2AL) to yield (R)-2,3-dihydroxy-isovalerate. In the isomerase reaction, S2AL is rearranged via a Mg-dependent methyl migration to produce 3-hydroxy-3-methyl-2-ketobutyrate (HMKB). In the reductase reaction, this 2-ketoacid undergoes a metal-dependent reduction by NADPH to yield (R)-2,3-dihydroxy-isovalerate. In Cereibacter sphaeroides (strain ATCC 17025 / ATH 2.4.3) (Rhodobacter sphaeroides), this protein is Ketol-acid reductoisomerase (NADP(+)).